A 102-amino-acid polypeptide reads, in one-letter code: Defensin-like protein 285 (102 aa).

The N-terminal stretch at 1 to 28 (MTNLYFKTAFLLSLLLLSFSYQSKLIEA) is a signal peptide. 4 disulfide bridges follow: Cys-39-Cys-100, Cys-64-Cys-83, Cys-70-Cys-88, and Cys-75-Cys-90.

The protein belongs to the DEFL family.

It is found in the secreted. This Arabidopsis thaliana (Mouse-ear cress) protein is Defensin-like protein 285.